Here is an 875-residue protein sequence, read N- to C-terminus: Neurotrypsin (875 aa).

A signal peptide spans 1-20; that stretch reads MTLARFVLALVLGALPEVVX. N-linked (GlcNAc...) asparagine glycosylation is present at Asn-26. Residues 31-88 form a disordered region; sequence HRPRHSPPTGPHYPYYLPTQQRPPRTRPPPPLPRFPRPPRALPAQRPHALQAGHTPRP. The segment covering 56-71 has biased composition (pro residues); sequence TRPPPPLPRFPRPPRA. In terms of domain architecture, Kringle spans 93–165; the sequence is CPAGEPWVSV…GKVDWGYCDC (73 aa). Disulfide bonds link Cys-93–Cys-165, Cys-109–Cys-149, Cys-138–Cys-163, Cys-195–Cys-259, Cys-208–Cys-269, Cys-239–Cys-249, Cys-305–Cys-369, Cys-318–Cys-379, Cys-349–Cys-359, Cys-412–Cys-475, Cys-425–Cys-485, Cys-455–Cys-465, Cys-525–Cys-589, Cys-538–Cys-599, Cys-569–Cys-579, Cys-619–Cys-750, Cys-661–Cys-677, Cys-765–Cys-831, Cys-794–Cys-808, and Cys-821–Cys-850. SRCR domains follow at residues 170 to 271, 280 to 381, 387 to 487, and 500 to 601; these read IRLR…TCSF, IRLV…SCTP, IRLA…ACYP, and VRLM…ICDY. The tract at residues 619–630 is zymogen activation region; sequence CGLRLLHRRQKR. The Peptidase S1 domain maps to 631–874; that stretch reads IIGGKNSLRG…FVPWIKSVTK (244 aa). His-676 functions as the Charge relay system in the catalytic mechanism. Residue Asn-683 is glycosylated (N-linked (GlcNAc...) asparagine). The active-site Charge relay system is the Asp-726. Ser-825 (charge relay system) is an active-site residue.

The protein belongs to the peptidase S1 family.

The protein resides in the secreted. Plays a role in neuronal plasticity and the proteolytic action may subserve structural reorganizations associated with learning and memory operations. The polypeptide is Neurotrypsin (PRSS12) (Nomascus leucogenys (Northern white-cheeked gibbon)).